The primary structure comprises 134 residues: MIAIERYQLIISKFRMWLFLGCSVEERHFKQPVLISVTFSYNEVPSACLSDKLSDACCYLEVTSLIEEIANTKPYALIEHLANELFDSLVISFGDKASKIDLEVEKERPPVPNLLNPIKFTISKELCPSPVLSA.

Substrate-binding positions include E26, Y59, and 78-79 (IE). K106 (proton donor/acceptor) is an active-site residue.

This sequence belongs to the DHNA family.

It carries out the reaction 7,8-dihydroneopterin = 6-hydroxymethyl-7,8-dihydropterin + glycolaldehyde. Its pathway is cofactor biosynthesis; tetrahydrofolate biosynthesis; 2-amino-4-hydroxy-6-hydroxymethyl-7,8-dihydropteridine diphosphate from 7,8-dihydroneopterin triphosphate: step 3/4. Its function is as follows. Catalyzes the conversion of 7,8-dihydroneopterin to 6-hydroxymethyl-7,8-dihydropterin. This is Probable dihydroneopterin aldolase (folB) from Chlamydia pneumoniae (Chlamydophila pneumoniae).